A 103-amino-acid chain; its full sequence is Large ribosomal subunit protein bL21 (103 aa).

The protein belongs to the bacterial ribosomal protein bL21 family. As to quaternary structure, part of the 50S ribosomal subunit. Contacts protein L20.

This protein binds to 23S rRNA in the presence of protein L20. The sequence is that of Large ribosomal subunit protein bL21 from Sodalis glossinidius (strain morsitans).